A 162-amino-acid polypeptide reads, in one-letter code: Putative colanic acid biosynthesis acetyltransferase WcaB (162 aa).

This sequence belongs to the transferase hexapeptide repeat family.

It participates in slime biogenesis; slime polysaccharide biosynthesis. This Escherichia coli O157:H7 protein is Putative colanic acid biosynthesis acetyltransferase WcaB (wcaB).